We begin with the raw amino-acid sequence, 221 residues long: Large ribosomal subunit protein bL25 (221 aa).

Positions 192–221 (APRVEKEETEEDTVAPGDVPAENSKDADEE) are disordered.

Belongs to the bacterial ribosomal protein bL25 family. CTC subfamily. As to quaternary structure, part of the 50S ribosomal subunit; part of the 5S rRNA/L5/L18/L25 subcomplex. Contacts the 5S rRNA. Binds to the 5S rRNA independently of L5 and L18.

Functionally, this is one of the proteins that binds to the 5S RNA in the ribosome where it forms part of the central protuberance. The chain is Large ribosomal subunit protein bL25 from Idiomarina loihiensis (strain ATCC BAA-735 / DSM 15497 / L2-TR).